The following is a 512-amino-acid chain: Cytochrome P450 monooxygenase ABA1 (512 aa).

A helical membrane pass occupies residues 13 to 32 (HWLSGILAIATVYLATSYII). Residue C458 participates in heme binding.

This sequence belongs to the cytochrome P450 family. The cofactor is heme.

The protein localises to the membrane. It functions in the pathway hormone biosynthesis. Its function is as follows. Cytochrome P450 monooxygenase involved in the biosynthesis of abscisic acid (ABA), a phytohormone that acts antagonistically toward salicylic acid (SA), jasmonic acid (JA) and ethylene (ETH) signaling, to impede plant defense responses. During pathogen-host interaction, ABA plays a dual role in disease severity by increasing plant susceptibility and accelerating pathogenesis in the fungus itself. The first step of the pathway catalyzes the reaction from farnesyl diphosphate to alpha-ionylideneethane performed by the alpha-ionylideneethane synthase ABA3 via a three-step reaction mechanism involving 2 neutral intermediates, beta-farnesene and allofarnesene. The cytochrome P450 monooxygenase ABA1 might then be involved in the conversion of alpha-ionylideneethane to alpha-ionylideneacetic acid. Alpha-ionylideneacetic acid is further converted to abscisic acid in 2 steps involving the cytochrome P450 monooxygenase ABA2 and the short-chain dehydrogenase/reductase ABA4, via the intermediates 1'-deoxy-ABA or 1',4'-trans-diol-ABA, depending on the order of action of these 2 enzymes. ABA2 is responsible for the hydroxylation of carbon atom C-1' and ABA4 might be involved in the oxidation of the C-4' carbon atom. This Pyricularia oryzae (strain Y34) (Rice blast fungus) protein is Cytochrome P450 monooxygenase ABA1.